Reading from the N-terminus, the 1005-residue chain is Beta/gamma crystallin domain-containing protein 3 (1005 aa).

A phosphoserine mark is found at Ser-122, Ser-129, Ser-130, Ser-136, and Ser-140. Disordered regions lie at residues Glu-132–Val-159 and Asn-173–Thr-198. Residues Gln-180 to Ala-189 are compositionally biased toward acidic residues. 9 consecutive Beta/gamma crystallin 'Greek key' domains span residues Gly-367 to Leu-416, Gly-462 to Gln-500, Leu-512 to Gly-556, Gly-557 to Gln-599, Ser-605 to Ser-647, Gly-648 to Gln-690, His-701 to Arg-737, Gly-738 to Asp-781, and Gly-828 to Lys-869. The Ricin B-type lectin domain occupies Pro-871 to Glu-1003.

This sequence belongs to the beta/gamma-crystallin family.

This is Beta/gamma crystallin domain-containing protein 3 (Crybg3) from Mus musculus (Mouse).